Here is a 337-residue protein sequence, read N- to C-terminus: Heat-inducible transcription repressor HrcA (337 aa).

Belongs to the HrcA family.

Negative regulator of class I heat shock genes (grpE-dnaK-dnaJ and groELS operons). Prevents heat-shock induction of these operons. This is Heat-inducible transcription repressor HrcA from Polaromonas naphthalenivorans (strain CJ2).